Here is a 523-residue protein sequence, read N- to C-terminus: Sugar carrier protein C (523 aa).

At 1–25 the chain is on the cytoplasmic side; sequence MPAVGGIPPSGGNRKVYPGNLTLYV. Transmembrane regions (helical) follow at residues 26-46, 86-106, 120-140, 143-163, 172-192, 205-225, 298-320, 327-347, 351-371, 387-407, 433-453, and 456-476; these read TVTC…IGIS, MFTS…STIT, VLFC…MLIL, ILLG…LSEM, LNIG…VLNY, LSLG…LVLP, LTGI…FGSD, VITG…VDKW, FLFL…AACI, WYAV…AWSW, SVNM…LCHL, and GLFI…YYFL. Residues 477 to 523 lie on the Cytoplasmic side of the membrane; sequence PETKGIPIEEMGQVWKQHWYWSRYVVDEDYPNGGLEMGKEGRIPKNV.

This sequence belongs to the major facilitator superfamily. Sugar transporter (TC 2.A.1.1) family.

The protein localises to the membrane. The polypeptide is Sugar carrier protein C (STC) (Ricinus communis (Castor bean)).